A 154-amino-acid chain; its full sequence is Putative pre-16S rRNA nuclease (154 aa).

It belongs to the YqgF nuclease family.

It is found in the cytoplasm. Its function is as follows. Could be a nuclease involved in processing of the 5'-end of pre-16S rRNA. This is Putative pre-16S rRNA nuclease from Rickettsia africae (strain ESF-5).